Consider the following 223-residue polypeptide: Small ribosomal subunit protein uS3 (223 aa).

In terms of domain architecture, KH type-2 spans 39-108 (IRKFVKKKGA…VILINIVEVK (70 aa)).

This sequence belongs to the universal ribosomal protein uS3 family. In terms of assembly, part of the 30S ribosomal subunit. Forms a tight complex with proteins S10 and S14.

Functionally, binds the lower part of the 30S subunit head. Binds mRNA in the 70S ribosome, positioning it for translation. The sequence is that of Small ribosomal subunit protein uS3 from Clostridium kluyveri (strain NBRC 12016).